Reading from the N-terminus, the 310-residue chain is Membrane protein insertase YidC 2 (310 aa).

An N-terminal signal peptide occupies residues 1–23 (MKKIYKRLLFSGLALSMLFFLSG). Cysteine 24 carries N-palmitoyl cysteine lipidation. Cysteine 24 is lipidated: S-diacylglycerol cysteine. Helical transmembrane passes span 34-54 (GEGWVYKFFAAPMGSVIQYLA), 57-77 (LGLGFGFAIIIVTVIVRLLIL), 136-156 (FGGLGCLPLLIQMPFFSALYI), 180-200 (IITVIIGILYLVQSWVSTLSV), and 220-240 (VMISIGAPAGGALYWLVSGIF). Residues 263–310 (EFKKNPPKPFKSNARKDITPQANNDKKLITSKKQKSNRNAGKQRHHKQ) are disordered. Residues 276 to 290 (ARKDITPQANNDKKL) show a composition bias toward basic and acidic residues. Over residues 291 to 310 (ITSKKQKSNRNAGKQRHHKQ) the composition is skewed to basic residues.

It belongs to the OXA1/ALB3/YidC family. Type 2 subfamily.

It localises to the cell membrane. In terms of biological role, required for the insertion and/or proper folding and/or complex formation of integral membrane proteins into the membrane. Involved in integration of membrane proteins that insert both dependently and independently of the Sec translocase complex, as well as at least some lipoproteins. Partially complements an E.coli yidC depletion experiment. The polypeptide is Membrane protein insertase YidC 2 (yidC2) (Streptococcus mutans serotype c (strain ATCC 700610 / UA159)).